The following is a 248-amino-acid chain: Cyclo(L-leucyl-L-leucyl) synthase (248 aa).

Ser37 (nucleophile) is an active-site residue. Residues Asn40, 180–184, Tyr204, and 209–210 contribute to the substrate site; these read YVIAE and KL.

Belongs to the CDPS family. Monomer.

The catalysed reaction is 2 L-leucyl-tRNA(Leu) = cyclo(L-leucyl-L-leucyl) + 2 tRNA(Leu) + 2 H(+). In terms of biological role, involved in the biosynthesis of pulcherrimin, a red extracellular pigment. It uses activated amino acids in the form of aminoacyl-tRNAs (aa-tRNAs) as substrates to catalyze the ATP-independent formation of cyclodipeptides which are intermediates in diketopiperazine (DKP) biosynthetic pathways. Catalyzes the formation of cyclo(L-Leu-L-Leu) (cLL) from L-leucyl-tRNA(Leu). Can also incorporate various nonpolar residues, such as L-phenylalanine, L-leucine and methionine, into cyclodipeptides. The polypeptide is Cyclo(L-leucyl-L-leucyl) synthase (yvmC) (Bacillus subtilis (strain 168)).